Consider the following 252-residue polypeptide: MATQNPIQEVQESENSDHLIISQDPQHPANLIPELCSKFWHLGWVTGTGGGASIRNDNLVYLAPSGVQKELMKPEHIYVLDITAQVNPKQRIYLRSPPNLKPSQCTPLFMAAFTKRNAGCCIHTHSQWAVLITLLLESAPNTTMFEINNIEQIKAFGKGYTKTGNLGYHDTLRIPVIENTPHEEDLTEYLEEAMEKYPDTYAVLVRRHGVYVWGESVHKAKTQCESLDYLFQIAVEMKKLGLPWLSNVKPIA.

Residue Cys-105 participates in substrate binding. Positions 123 and 125 each coordinate Zn(2+). Glu-151 (proton donor/acceptor) is an active-site residue. His-208 contributes to the Zn(2+) binding site.

The protein belongs to the aldolase class II family. MtnB subfamily. The cofactor is Zn(2+).

The protein resides in the cytoplasm. It catalyses the reaction 5-(methylsulfanyl)-D-ribulose 1-phosphate = 5-methylsulfanyl-2,3-dioxopentyl phosphate + H2O. Its pathway is amino-acid biosynthesis; L-methionine biosynthesis via salvage pathway; L-methionine from S-methyl-5-thio-alpha-D-ribose 1-phosphate: step 2/6. In terms of biological role, catalyzes the dehydration of methylthioribulose-1-phosphate (MTRu-1-P) into 2,3-diketo-5-methylthiopentyl-1-phosphate (DK-MTP-1-P). This Sclerotinia sclerotiorum (strain ATCC 18683 / 1980 / Ss-1) (White mold) protein is Methylthioribulose-1-phosphate dehydratase.